Consider the following 211-residue polypeptide: UPF0329 protein ECU07_1880/ECU10_0020 (211 aa).

It belongs to the UPF0329 family.

The sequence is that of UPF0329 protein ECU07_1880/ECU10_0020 from Encephalitozoon cuniculi (strain GB-M1) (Microsporidian parasite).